A 368-amino-acid polypeptide reads, in one-letter code: tRNA-specific 2-thiouridylase MnmA (368 aa).

Residues 11–18 and Met-37 each bind ATP; that span reads GMSGGVDS. The tract at residues 97 to 99 is interaction with target base in tRNA; that stretch reads NPD. The Nucleophile role is filled by Cys-102. Cys-102 and Cys-199 form a disulfide bridge. Gly-127 is an ATP binding site. The interval 149–151 is interaction with tRNA; the sequence is KDQ. Cys-199 (cysteine persulfide intermediate) is an active-site residue. The segment at 311 to 312 is interaction with tRNA; that stretch reads RY.

This sequence belongs to the MnmA/TRMU family. Interacts with TusE.

The protein localises to the cytoplasm. The catalysed reaction is S-sulfanyl-L-cysteinyl-[protein] + uridine(34) in tRNA + AH2 + ATP = 2-thiouridine(34) in tRNA + L-cysteinyl-[protein] + A + AMP + diphosphate + H(+). Its function is as follows. Catalyzes the 2-thiolation of uridine at the wobble position (U34) of tRNA(Lys), tRNA(Glu) and tRNA(Gln), leading to the formation of s(2)U34, the first step of tRNA-mnm(5)s(2)U34 synthesis. Sulfur is provided by IscS, via a sulfur-relay system. Binds ATP and its substrate tRNAs. In Salmonella paratyphi B (strain ATCC BAA-1250 / SPB7), this protein is tRNA-specific 2-thiouridylase MnmA.